The sequence spans 207 residues: dTTP/UTP pyrophosphatase (207 aa).

D79 acts as the Proton acceptor in catalysis.

It belongs to the Maf family. YhdE subfamily. It depends on a divalent metal cation as a cofactor.

It localises to the cytoplasm. The catalysed reaction is dTTP + H2O = dTMP + diphosphate + H(+). It catalyses the reaction UTP + H2O = UMP + diphosphate + H(+). Nucleoside triphosphate pyrophosphatase that hydrolyzes dTTP and UTP. May have a dual role in cell division arrest and in preventing the incorporation of modified nucleotides into cellular nucleic acids. This is dTTP/UTP pyrophosphatase from Nitrobacter winogradskyi (strain ATCC 25391 / DSM 10237 / CIP 104748 / NCIMB 11846 / Nb-255).